A 341-amino-acid chain; its full sequence is Endoglucanase 1 (341 aa).

A signal peptide spans 1-16 (MKTATLLAALSVLAGA). Positions 17–30 (LAAPLAGDSALHRR) are excised as a propeptide. Glutamate 166 functions as the Proton donor in the catalytic mechanism. Glutamate 275 serves as the catalytic Nucleophile.

Belongs to the glycosyl hydrolase 5 (cellulase A) family.

It catalyses the reaction Endohydrolysis of (1-&gt;4)-beta-D-glucosidic linkages in cellulose, lichenin and cereal beta-D-glucans.. Has endoglucanase activity on carboxymethyl-cellulose (CMC). This is Endoglucanase 1 (CMC1) from Saitozyma flava (Cryptococcus flavus).